The following is an 80-amino-acid chain: DNA-directed RNA polymerase RPB10 homolog (80 aa).

The Zn(2+) site is built by Cys-7, Cys-10, Cys-65, and Cys-66.

The protein belongs to the archaeal RpoN/eukaryotic RPB10 RNA polymerase subunit family. Part of the viral DNA-directed RNA polymerase that consists of 8 polII-like subunits (RPB1, RPB2, RPB3, RPB5, RPB6, RPB7, RPB9, RPB10), a capping enzyme and a termination factor.

It is found in the host cytoplasm. Its function is as follows. Component of the DNA-directed RNA polymerase (RNAP) that catalyzes the transcription in the cytoplasm of viral DNA into RNA using the four ribonucleoside triphosphates as substrates. The sequence is that of DNA-directed RNA polymerase RPB10 homolog from African swine fever virus (isolate Pig/Kenya/KEN-50/1950) (ASFV).